We begin with the raw amino-acid sequence, 78 residues long: UPF0154 protein lp_2061 (78 aa).

Residues 5–27 (TGIWILIVVIGVLVGLTGGFFGA) traverse the membrane as a helical segment.

The protein belongs to the UPF0154 family.

It localises to the membrane. The sequence is that of UPF0154 protein lp_2061 from Lactiplantibacillus plantarum (strain ATCC BAA-793 / NCIMB 8826 / WCFS1) (Lactobacillus plantarum).